A 183-amino-acid chain; its full sequence is Phosphinothricin N-acetyltransferase (183 aa).

Residues 8–173 (ADIRRATEAD…WQLDFSLPVP (166 aa)) enclose the N-acetyltransferase domain. Acetyl-CoA-binding positions include 91–93 (VYV), 99–104 (RTGLGS), and asparagine 130.

It belongs to the acetyltransferase family. PAT/BAR subfamily.

It catalyses the reaction phosphinothricin + acetyl-CoA = N-acetylphosphinothricin + CoA + H(+). Its function is as follows. Inactivates phosphinothricin (PPT) by transfer of an acetyl group from acetyl CoA. Can also acetylate demethylphosphinothricin but not PTT or glutamate. This enzyme is an effector of phosphinothricin tripeptide (PTT or bialaphos) resistance. In Streptomyces hygroscopicus, this protein is Phosphinothricin N-acetyltransferase.